The primary structure comprises 753 residues: A-kinase anchor protein 200 (753 aa).

5 disordered regions span residues 1–345 (MGKA…QIEA), 462–482 (VETRSSSPPPPLPKSPPPSRV), 531–604 (TEQE…IDPA), 620–641 (VEKETGSISSNVAESSSVSDEQ), and 658–684 (VEETTEQETSDQQVISEEAHSDNDKEN). G2 carries N-myristoyl glycine lipidation. 2 stretches are compositionally biased toward basic and acidic residues: residues 8-38 (RSIDITTDPKKVGEGDEVAGKVEKIDVDQKT) and 59-77 (AVEKKETEEHSENDKDLTT). Low complexity predominate over residues 81–93 (AAVAEGGDAVAET). Positions 119–148 (KSKSKKDKVKKKWSFRSISFGKKDKQKPAK) are F-actin binding. Basic residues predominate over residues 120-132 (SKSKKDKVKKKWS). 3 positions are modified to phosphoserine: S132, S135, and S137. The span at 139 to 151 (GKKDKQKPAKSEE) shows a compositional bias: basic and acidic residues. A compositionally biased stretch (low complexity) spans 152–181 (ATSPTSGTTSPTTAEAEAAPAGDAAVAEPS). Positions 216 to 227 (EQEKQANGETEK) are enriched in basic and acidic residues. The segment covering 246 to 262 (EPATVTATESNTTATEE) has biased composition (low complexity). Positions 345–725 (ASSEVIETVT…AEQEGESNNK (381 aa)) are interaction with PKA-R2. The span at 468–480 (SPPPPLPKSPPPS) shows a compositional bias: pro residues. A compositionally biased stretch (basic and acidic residues) spans 532–544 (EQEKQQEEAKVDS). The segment covering 545 to 561 (VPETIEESSSTVVVEEV) has biased composition (low complexity). Positions 578–594 (DVQKPIEDQDTPDEKES) are enriched in basic and acidic residues. Over residues 626 to 638 (SISSNVAESSSVS) the composition is skewed to low complexity. Basic and acidic residues predominate over residues 674–684 (EEAHSDNDKEN).

In terms of assembly, homodimer. Interacts with Cam; interaction is calcium-dependent and is inhibited by PKC-mediated phosphorylation of Akap200. Interacts with N/Notch; the interaction stabilizes N/Notch protein levels by preventing Cbl-mediated ubiquitination and subsequent lysosomal degradation of N/Notch. Interacts with Pka-R2. Binds to F-actin; interaction is independent of myristoylation, but is inhibited by Akap200 phosphorylation and Cam binding. Isoform B: Does not bind to Pka-R2. Post-translationally, myristoylated; myristoylation promotes accumulation at the cell periphery. In terms of processing, phosphorylated; phosphorylation prevents binding to F-actin and Cam. As to expression, detected in the brain in both neurons and glia (including perineurial glia); specifically in the neuronal nuclei in the cortex and synaptic neuropil (at protein level). Detected in germline cells, somatic follicle cells and outer rim of the ring canals during oogenesis (at protein level). Isoform A: Detected in the adult (at protein level). Isoform B: Detected in the adult with higher levels in the head (at protein level).

Its subcellular location is the cytoplasm. It is found in the cytosol. It localises to the cell membrane. The protein localises to the cytoskeleton. Its function is as follows. Scaffolding protein involved in the regulation of PKA signaling and anchoring to the actin cytoskeleton integrating signals propagated by cAMP, diacylglycerol and calcium. Contributes to the maintenance and regulation of cytoskeletal structures in germline via PKA-mediated signaling. As part of ethanol response in the glia, mediates ethanol-induced structural remodeling of actin cytoskeleton and perineurial membrane topology by anchoring PKA to the membrane of perineurial glia. In specific tissues such as eye and thorax, promotes N/Notch protein stability by inhibiting Cbl-mediated ubiquitination and lysosomal degradation pathway of N/Notch in a PKA-independent way. In the circadian brain neurons evening cells (E-cells), might have a role in circadian pacemaker synchronization by playing a redundant role in signaling downstream of the G protein-couple receptor Pdfr. The polypeptide is A-kinase anchor protein 200 (Drosophila melanogaster (Fruit fly)).